The primary structure comprises 121 residues: uncharacterized protein (121 aa).

Disordered regions lie at residues 1–28 (MGCA…QNGD) and 60–82 (QENL…VPGL). Serine 95 and serine 115 each carry phosphoserine.

In terms of tissue distribution, expressed in spleen, prostate, testis and uterus.

This is an uncharacterized protein from Homo sapiens (Human).